The following is an 81-amino-acid chain: ATP synthase subunit c, chloroplastic (81 aa).

A run of 2 helical transmembrane segments spans residues 3-23 (PLIS…ASIG) and 57-77 (LAFM…LLFA).

Belongs to the ATPase C chain family. F-type ATPases have 2 components, F(1) - the catalytic core - and F(0) - the membrane proton channel. F(1) has five subunits: alpha(3), beta(3), gamma(1), delta(1), epsilon(1). F(0) has four main subunits: a(1), b(1), b'(1) and c(10-14). The alpha and beta chains form an alternating ring which encloses part of the gamma chain. F(1) is attached to F(0) by a central stalk formed by the gamma and epsilon chains, while a peripheral stalk is formed by the delta, b and b' chains.

The protein localises to the plastid. It is found in the chloroplast thylakoid membrane. F(1)F(0) ATP synthase produces ATP from ADP in the presence of a proton or sodium gradient. F-type ATPases consist of two structural domains, F(1) containing the extramembraneous catalytic core and F(0) containing the membrane proton channel, linked together by a central stalk and a peripheral stalk. During catalysis, ATP synthesis in the catalytic domain of F(1) is coupled via a rotary mechanism of the central stalk subunits to proton translocation. Its function is as follows. Key component of the F(0) channel; it plays a direct role in translocation across the membrane. A homomeric c-ring of between 10-14 subunits forms the central stalk rotor element with the F(1) delta and epsilon subunits. The protein is ATP synthase subunit c, chloroplastic of Gossypium barbadense (Sea Island cotton).